Here is a 590-residue protein sequence, read N- to C-terminus: MTYLFNQPSSFARELTEGFVAAHADKVRQVPGGVVRSTRSREGGVAIVVGGGSGHYPAFAGLVGQGLAHGAAMGNLFASPSAQQICSVARAAHNGGGVLLTFGNYAGDVLHFGQAKARLNAEGIPCELLAVTDDISSAPLNEWQKRRGVAGDLMVFKAVSAAAEAGYDLAAVLEVAERANQRTRSLGVAFSGCTLPGAEHPLFTVPEGMMAVGMGIHGEPGIRDVPISTADELAELLVSSLLKEVPHGITTLSGQRISVVLNGLGGVKYEELFVVYRRVSQLLVEQGLTVVEPEVGELVTSFNMAGLSLTLFWLDEELERFWRAPADAPAFRKGSMSPGEPLAERTFVAELEVIPNATAASKAAAHCVAAALNAARDIVLANVTELGRIDAIAGDGDHGIGMERGVIAAADKATEMLERQAGAGTLLQRAADAWADQAGGTSGAIWGVALNALGTVLGDEQRPDGRRVADGVRQAKESVMHFGKAKPGDKTLVDALIPFSLALTQRVETGMSLPEAWQQAAQCAQQAADDTAQLLPKIGRARPLAEKSLGTPDAGAISLAMILDAVSAVLNSDTTSTSSHQTATQAESER.

Residues 7–331 (QPSSFARELT…WRAPADAPAF (325 aa)) enclose the DhaK domain. His-217 acts as the Tele-hemiaminal-histidine intermediate in catalysis. A DhaL domain is found at 366–568 (HCVAAALNAA…LAMILDAVSA (203 aa)). ADP is bound by residues 398–401 (HGIG), 441–442 (TS), Gly-483, Arg-540, and 553–555 (DAG).

It carries out the reaction L-erythrulose + ATP = L-erythrulose 1-phosphate + ADP + H(+). It participates in carbohydrate metabolism. Functionally, involved in catabolism of D-apiose. Catalyzes the phosphorylation of L-erythrulose to L-erythrulose 1-phosphate. Can also phosphorylate D-erythrulose and dihydroxyacetone in vitro. The polypeptide is L-erythrulose kinase (Pectobacterium atrosepticum (strain SCRI 1043 / ATCC BAA-672) (Erwinia carotovora subsp. atroseptica)).